The sequence spans 194 residues: Interleukin-18 (194 aa).

The propeptide occupies 1-36; sequence MAAMSEEGSCVNFKEMMFIDNTLYLIPEDNGDLESD.

Belongs to the IL-1 family. Forms a ternary complex with ligand-binding receptor subunit IL18R1 and signaling receptor subunit IL18RAP at the plasma membrane. Mature IL18 first binds to IL18R1 forming a low affinity binary complex, which then interacts with IL18RAP to form a high affinity ternary complex that signals inside the cell. Interacts with cargo receptor TMED10; the interaction mediates the translocation from the cytoplasm into the ERGIC (endoplasmic reticulum-Golgi intermediate compartment) and thereby secretion. The pro-IL-18 precursor is processed by CASP1 to yield its mature, active form. The pro-IL-18 precursor is however not processed by Casp4/Casp11 in rodents. The pro-IL-18 precursor features autoinhibitory interactions between the propeptide and the post-cleavage-site region, preventing recognition by the IL18R1 receptor. Processing by CASP1 induces conformational changes to generate critical receptor-binding sites. The mature form is then secreted and released in the extracellular milieu by passing through the gasdermin-D (GSDMD) pore. In contrast, cleavage by CASP3 inactivates IL18.

The protein localises to the cytoplasm. It localises to the cytosol. Its subcellular location is the secreted. In terms of biological role, pro-inflammatory cytokine primarily involved in epithelial barrier repair, polarized T-helper 1 (Th1) cell and natural killer (NK) cell immune responses. Upon binding to IL18R1 and IL18RAP, forms a signaling ternary complex which activates NF-kappa-B, triggering synthesis of inflammatory mediators. Synergizes with IL12/interleukin-12 to induce IFNG synthesis from T-helper 1 (Th1) cells and natural killer (NK) cells. Involved in transduction of inflammation downstream of pyroptosis: its mature form is specifically released in the extracellular milieu by passing through the gasdermin-D (GSDMD) pore. The polypeptide is Interleukin-18 (Il18) (Rattus norvegicus (Rat)).